Consider the following 588-residue polypeptide: Putative calcium-binding mitochondrial carrier F55A11.4 (588 aa).

The span at 1–14 shows a compositional bias: polar residues; that stretch reads MINKNEQTESTSGA. The tract at residues 1–25 is disordered; sequence MINKNEQTESTSGAAEQKEDDEEQY. EF-hand domains are found at residues 73-108, 109-139, 140-175, and 176-211; these read EKER…ETPH, IPAN…SYVL, ENEQ…IGVP, and LDDH…YPSS. Positions 86, 88, 90, 92, and 97 each coordinate Ca(2+). Residues Asp153, Asn155, Asp157, and Glu164 each contribute to the Ca(2+) site. Solcar repeat units follow at residues 246–332, 342–428, and 440–529; these read GIWW…LKRL, ISTF…LKRT, and PGVL…VRTG. A run of 6 helical transmembrane segments spans residues 252 to 269, 307 to 326, 352 to 365, 403 to 422, 446 to 463, and 504 to 523; these read LVAG…TAPF, GNGI…FMCY, SAAG…IYPM, GYLP…LAIY, LACG…SYPF, and GITP…YVVY.

Belongs to the mitochondrial carrier (TC 2.A.29) family. Homodimer (via N-terminus).

The protein localises to the mitochondrion inner membrane. Functionally, mitochondrial and calcium-binding carrier that catalyzes the calcium-dependent exchange of cytoplasmic glutamate with mitochondrial aspartate across the mitochondrial inner membrane. This is Putative calcium-binding mitochondrial carrier F55A11.4 from Caenorhabditis elegans.